The following is a 158-amino-acid chain: Transcription antitermination protein NusB (158 aa).

Basic and acidic residues predominate over residues 1–12; sequence MKRVEKRAEKQG. A disordered region spans residues 1–20; the sequence is MKRVEKRAEKQGRGTARKSR.

Belongs to the NusB family.

Functionally, involved in transcription antitermination. Required for transcription of ribosomal RNA (rRNA) genes. Binds specifically to the boxA antiterminator sequence of the ribosomal RNA (rrn) operons. This chain is Transcription antitermination protein NusB, found in Nitrosospira multiformis (strain ATCC 25196 / NCIMB 11849 / C 71).